We begin with the raw amino-acid sequence, 156 residues long: Keratin, high-sulfur matrix protein, B2B (156 aa).

Ala-1 is subject to N-acetylalanine. 4 consecutive repeats follow at residues Pro-26 to Gln-35, Pro-36 to Gln-45, Pro-46 to Gln-55, and Pro-56 to Glu-65.

Its function is as follows. The keratin products of mammalian epidermal derivatives such as wool and hair consist of microfibrils embedded in a rigid matrix of other proteins. The matrix proteins include the high-sulfur and high-tyrosine keratins, having molecular weights of 6-20 kDa, whereas the microfibrils contain the larger, low-sulfur keratins (40-56 kDa). This is Keratin, high-sulfur matrix protein, B2B from Ovis aries (Sheep).